The following is a 131-amino-acid chain: Small ribosomal subunit protein uS8 (131 aa).

The protein belongs to the universal ribosomal protein uS8 family. In terms of assembly, part of the 30S ribosomal subunit. Contacts proteins S5 and S12.

Functionally, one of the primary rRNA binding proteins, it binds directly to 16S rRNA central domain where it helps coordinate assembly of the platform of the 30S subunit. The chain is Small ribosomal subunit protein uS8 from Hyphomonas neptunium (strain ATCC 15444).